The primary structure comprises 514 residues: Na(+)/H(+) antiporter NhaB (514 aa).

Transmembrane regions (helical) follow at residues Leu-23–Ala-43, Pro-63–Ala-83, Leu-97–Phe-117, Leu-120–Phe-140, Phe-144–Ile-164, Leu-202–Pro-222, Phe-238–Met-258, Ala-303–Ile-323, Leu-357–Ile-377, Leu-391–Ile-411, Ala-447–Ile-467, and Val-475–Phe-495.

The protein belongs to the NhaB Na(+)/H(+) (TC 2.A.34) antiporter family.

The protein localises to the cell inner membrane. The enzyme catalyses 2 Na(+)(in) + 3 H(+)(out) = 2 Na(+)(out) + 3 H(+)(in). Its function is as follows. Na(+)/H(+) antiporter that extrudes sodium in exchange for external protons. The sequence is that of Na(+)/H(+) antiporter NhaB from Salmonella agona (strain SL483).